Consider the following 444-residue polypeptide: Putative GTP cyclohydrolase URC1 (444 aa).

268-272 contacts GTP; it reads RVHDE. Residues Cys273, Cys284, and Cys286 each coordinate Zn(2+). 315–317 contacts GTP; that stretch reads EGR. The active-site Proton acceptor is Asp353. Arg355 functions as the Nucleophile in the catalytic mechanism. GTP-binding residues include Ser377 and Lys382.

It belongs to the GTP cyclohydrolase II family.

Its subcellular location is the cytoplasm. The protein localises to the nucleus. In terms of biological role, involved in uracil catabolism. This chain is Putative GTP cyclohydrolase URC1 (URC1), found in Lachancea kluyveri (Yeast).